The primary structure comprises 105 residues: MRIVIYSMLVLLIAIQYPLWLGKGGWLKVYEMEKQVELQEAKNSLLALRNAKLEGDVKDLKDGTRAIEERARVEHGLIKEGEFFVQILPADQSSADTAKASTVKQ.

Residues 1-3 (MRI) lie on the Cytoplasmic side of the membrane. A helical transmembrane segment spans residues 4–21 (VIYSMLVLLIAIQYPLWL). Over 22 to 105 (GKGGWLKVYE…DTAKASTVKQ (84 aa)) the chain is Periplasmic. A coiled-coil region spans residues 32-60 (MEKQVELQEAKNSLLALRNAKLEGDVKDL).

Belongs to the FtsB family. Part of a complex composed of FtsB, FtsL and FtsQ.

The protein resides in the cell inner membrane. Functionally, essential cell division protein. May link together the upstream cell division proteins, which are predominantly cytoplasmic, with the downstream cell division proteins, which are predominantly periplasmic. The chain is Cell division protein FtsB from Polynucleobacter asymbioticus (strain DSM 18221 / CIP 109841 / QLW-P1DMWA-1) (Polynucleobacter necessarius subsp. asymbioticus).